The following is a 324-amino-acid chain: Beta-ketoacyl-[acyl-carrier-protein] synthase III (324 aa).

Residues cysteine 112 and histidine 249 contribute to the active site. Residues 250–254 are ACP-binding; it reads QANRR. Asparagine 279 is an active-site residue.

The protein belongs to the thiolase-like superfamily. FabH family. Homodimer.

The protein localises to the cytoplasm. It catalyses the reaction malonyl-[ACP] + acetyl-CoA + H(+) = 3-oxobutanoyl-[ACP] + CO2 + CoA. The protein operates within lipid metabolism; fatty acid biosynthesis. Catalyzes the condensation reaction of fatty acid synthesis by the addition to an acyl acceptor of two carbons from malonyl-ACP. Catalyzes the first condensation reaction which initiates fatty acid synthesis and may therefore play a role in governing the total rate of fatty acid production. Possesses both acetoacetyl-ACP synthase and acetyl transacylase activities. Its substrate specificity determines the biosynthesis of branched-chain and/or straight-chain of fatty acids. This is Beta-ketoacyl-[acyl-carrier-protein] synthase III from Streptococcus equi subsp. zooepidemicus (strain MGCS10565).